We begin with the raw amino-acid sequence, 541 residues long: Cytochrome bc1 complex cytochrome b subunit (541 aa).

A helical membrane pass occupies residues 36 to 56; that stretch reads FLLGEIALYSFIILILTGVYL. Positions 105 and 119 each coordinate heme. The next 3 helical transmembrane spans lie at 109–129, 137–157, and 169–189; these read ALMF…TGAF, WVIG…GYSL, and IMSA…WMIF. 2 residues coordinate heme: His-206 and His-221. Helical transmembrane passes span 207 to 227, 256 to 276, 325 to 345, 371 to 391, and 408 to 428; these read VLII…LVWY, SVAF…VTTI, VFWV…YPWI, LGVM…NDIW, and IGLI…CIGL.

Belongs to the cytochrome b family. The cytochrome bc1 complex is composed of a cytochrome b (QcrB), the Rieske protein iron-sulfur (QcrA) and a diheme cytochrome c (QcrC) subunit. Requires heme as cofactor.

The protein resides in the cell membrane. It catalyses the reaction a quinol + 2 Fe(III)-[cytochrome c](out) = a quinone + 2 Fe(II)-[cytochrome c](out) + 2 H(+)(out). Cytochrome b subunit of the cytochrome bc1 complex, an essential component of the respiratory electron transport chain required for ATP synthesis. The bc1 complex catalyzes the oxidation of menaquinol and the reduction of cytochrome c in the respiratory chain. The bc1 complex operates through a Q-cycle mechanism that couples electron transfer to generation of the proton gradient that drives ATP synthesis. This Corynebacterium efficiens (strain DSM 44549 / YS-314 / AJ 12310 / JCM 11189 / NBRC 100395) protein is Cytochrome bc1 complex cytochrome b subunit (qcrB).